The sequence spans 886 residues: Receptor-like kinase TMK2 (886 aa).

The first 20 residues, 1–20 (MIAKNFLLLLCFIALVNVES), serve as a signal peptide directing secretion. Residues 21–460 (SPDEAVMIAL…GKKASSNAGK (440 aa)) are Extracellular-facing. N41 is a glycosylation site (N-linked (GlcNAc...) asparagine). Residues C48 and C56 are joined by a disulfide bond. LRR repeat units lie at residues 59 to 83 (SNRVTAIQIGDRGISGKLPPDLGKL), 84 to 106 (TSLTKFEVMRNRLTGPIPSLAGL), 107 to 129 (KSLVTVYANDNDFTSVPEDFFSG), 131 to 155 (SSLQHVSLDNNPFDSWVIPPSLENA), 157 to 179 (SLVDFSAVNCNLSGKIPDYLFEG), 182 to 206 (FSSLTTLKLSYNSLVCEFPMNFSDS), 208 to 232 (VQVLMLNGQKGREKLHGSISFLQKM), 233 to 254 (TSLTNVTLQGNSFSGPLPDFSG), 255 to 279 (LVSLKSFNVRENQLSGLVPSSLFEL), and 281 to 302 (SLSDVALGNNLLQGPTPNFTAP). 3 N-linked (GlcNAc...) asparagine glycosylation sites follow: N154, N167, and N202. The N-linked (GlcNAc...) asparagine glycan is linked to N237. N298 carries an N-linked (GlcNAc...) asparagine glycan. 2 disulfide bridges follow: C315–C323 and C353–C361. 3 LRR repeats span residues 363–386 (GTDITVINFKNLGLNGTISPRFAD), 387–410 (FASLRVINLSQNNLNGTIPQELAK), and 411–438 (LSNLKTLDVSKNRLCGEVPRFNTTIVNT). N377, N394, N401, N432, and N437 each carry an N-linked (GlcNAc...) asparagine glycan. Residues 461–481 (IVGSVIGILLALLLIGVAIFF) traverse the membrane as a helical segment. Residues 482–886 (LVKKKMQYHK…ESTFKSGQGR (405 aa)) are Cytoplasmic-facing. Residues 547 to 827 (FDEKNILGRG…HVVNVLVSLV (281 aa)) enclose the Protein kinase domain. Residues 553–561 (LGRGGFGIV) and K575 contribute to the ATP site. D676 functions as the Proton acceptor in the catalytic mechanism.

It belongs to the protein kinase superfamily. Ser/Thr protein kinase family. Expressed in siliques and flowers.

The protein resides in the membrane. The enzyme catalyses L-seryl-[protein] + ATP = O-phospho-L-seryl-[protein] + ADP + H(+). The catalysed reaction is L-threonyl-[protein] + ATP = O-phospho-L-threonyl-[protein] + ADP + H(+). In terms of biological role, involved in auxin signal transduction and cell expansion and proliferation regulation. This Arabidopsis thaliana (Mouse-ear cress) protein is Receptor-like kinase TMK2.